Consider the following 93-residue polypeptide: Ribonuclease P protein component 1 (93 aa).

This sequence belongs to the eukaryotic/archaeal RNase P protein component 1 family. Consists of a catalytic RNA component and at least 4-5 protein subunits.

It localises to the cytoplasm. It catalyses the reaction Endonucleolytic cleavage of RNA, removing 5'-extranucleotides from tRNA precursor.. Its function is as follows. Part of ribonuclease P, a protein complex that generates mature tRNA molecules by cleaving their 5'-ends. In Methanosphaera stadtmanae (strain ATCC 43021 / DSM 3091 / JCM 11832 / MCB-3), this protein is Ribonuclease P protein component 1.